Here is a 125-residue protein sequence, read N- to C-terminus: Small ribosomal subunit protein bS16 (125 aa).

Positions Glu87–Asp125 are disordered. Basic and acidic residues predominate over residues Ala103 to Glu115.

This sequence belongs to the bacterial ribosomal protein bS16 family.

The protein is Small ribosomal subunit protein bS16 of Prochlorococcus marinus (strain MIT 9211).